Consider the following 539-residue polypeptide: Sphingosine-1-phosphate lyase (539 aa).

Positions 1-46 (MELAMDFALRLRDAANHHLSRYEPLVLLAAPLLALLAARTLHAAAA) are cleaved as a signal peptide. Over 47–54 (AVADRGLR) the chain is Lumenal. Residues 55–75 (TVLLALAMTAIKLLPGVSAYI) form a helical membrane-spanning segment. Residues 76-539 (NAEKRKVVDQ…LLVEFMDASC (464 aa)) are Cytoplasmic-facing. Lysine 344 bears the N6-(pyridoxal phosphate)lysine mark.

This sequence belongs to the group II decarboxylase family. Sphingosine-1-phosphate lyase subfamily. It depends on pyridoxal 5'-phosphate as a cofactor.

It localises to the endoplasmic reticulum membrane. It catalyses the reaction sphinganine 1-phosphate = hexadecanal + phosphoethanolamine. It functions in the pathway lipid metabolism; sphingolipid metabolism. Cleaves phosphorylated sphingoid bases (PSBs), such as sphingosine-1-phosphate, into fatty aldehydes and phosphoethanolamine. Elevates stress-induced ceramide production and apoptosis. The polypeptide is Sphingosine-1-phosphate lyase (SPL) (Oryza sativa subsp. japonica (Rice)).